The primary structure comprises 550 residues: Aspartate--tRNA ligase (550 aa).

Glu-162 serves as a coordination point for L-aspartate. Residues 186 to 189 (QIYK) are aspartate. L-aspartate is bound at residue Arg-208. Residues 208-210 (RDE) and Gln-217 each bind ATP. Residue His-417 participates in L-aspartate binding. Residue Glu-451 coordinates ATP. L-aspartate is bound at residue Arg-458. 499 to 502 (GIDR) contributes to the ATP binding site.

It belongs to the class-II aminoacyl-tRNA synthetase family. Type 1 subfamily. Homodimer.

Its subcellular location is the cytoplasm. The enzyme catalyses tRNA(Asp) + L-aspartate + ATP = L-aspartyl-tRNA(Asp) + AMP + diphosphate. Catalyzes the attachment of L-aspartate to tRNA(Asp) in a two-step reaction: L-aspartate is first activated by ATP to form Asp-AMP and then transferred to the acceptor end of tRNA(Asp). This is Aspartate--tRNA ligase from Mycoplasma genitalium (strain ATCC 33530 / DSM 19775 / NCTC 10195 / G37) (Mycoplasmoides genitalium).